The primary structure comprises 69 residues: DNA-directed RNA polymerase subunit epsilon (69 aa).

The protein belongs to the RNA polymerase subunit epsilon family. In terms of assembly, RNAP is composed of a core of 2 alpha, a beta and a beta' subunit. The core is associated with a delta subunit, and at least one of epsilon or omega. When a sigma factor is associated with the core the holoenzyme is formed, which can initiate transcription.

It carries out the reaction RNA(n) + a ribonucleoside 5'-triphosphate = RNA(n+1) + diphosphate. In terms of biological role, a non-essential component of RNA polymerase (RNAP). The sequence is that of DNA-directed RNA polymerase subunit epsilon from Listeria welshimeri serovar 6b (strain ATCC 35897 / DSM 20650 / CCUG 15529 / CIP 8149 / NCTC 11857 / SLCC 5334 / V8).